The sequence spans 86 residues: Cytochrome c oxidase subunit 6B1 (86 aa).

Ala2 carries the N-acetylalanine modification. One can recognise a CHCH domain in the interval 27 to 73 (TRNCWQNYLDFHRCEKAMTAKGGDVSVCEWYRRVYKSLCPISWVSTW). The short motif at 30–40 (CWQNYLDFHRC) is the Cx9C motif element. 2 cysteine pairs are disulfide-bonded: Cys30–Cys65 and Cys40–Cys54. Positions 54–65 (CEWYRRVYKSLC) match the Cx10C motif motif. Position 62 is an N6-acetyllysine (Lys62).

This sequence belongs to the cytochrome c oxidase subunit 6B family. In terms of assembly, component of the cytochrome c oxidase (complex IV, CIV), a multisubunit enzyme composed of 14 subunits. The complex is composed of a catalytic core of 3 subunits MT-CO1, MT-CO2 and MT-CO3, encoded in the mitochondrial DNA, and 11 supernumerary subunits COX4I1 (or COX4I2), COX5A, COX5B, COX6A2 (or COX6A1), COX6B1 (or COX6B2), COX6C, COX7A1 (or COX7A2), COX7B, COX7C, COX8B and NDUFA4, which are encoded in the nuclear genome. The complex exists as a monomer or a dimer and forms supercomplexes (SCs) in the inner mitochondrial membrane with NADH-ubiquinone oxidoreductase (complex I, CI) and ubiquinol-cytochrome c oxidoreductase (cytochrome b-c1 complex, complex III, CIII), resulting in different assemblies (supercomplex SCI(1)III(2)IV(1) and megacomplex MCI(2)III(2)IV(2)).

The protein localises to the mitochondrion inner membrane. The protein operates within energy metabolism; oxidative phosphorylation. In terms of biological role, component of the cytochrome c oxidase, the last enzyme in the mitochondrial electron transport chain which drives oxidative phosphorylation. The respiratory chain contains 3 multisubunit complexes succinate dehydrogenase (complex II, CII), ubiquinol-cytochrome c oxidoreductase (cytochrome b-c1 complex, complex III, CIII) and cytochrome c oxidase (complex IV, CIV), that cooperate to transfer electrons derived from NADH and succinate to molecular oxygen, creating an electrochemical gradient over the inner membrane that drives transmembrane transport and the ATP synthase. Cytochrome c oxidase is the component of the respiratory chain that catalyzes the reduction of oxygen to water. Electrons originating from reduced cytochrome c in the intermembrane space (IMS) are transferred via the dinuclear copper A center (CU(A)) of subunit 2 and heme A of subunit 1 to the active site in subunit 1, a binuclear center (BNC) formed by heme A3 and copper B (CU(B)). The BNC reduces molecular oxygen to 2 water molecules using 4 electrons from cytochrome c in the IMS and 4 protons from the mitochondrial matrix. This is Cytochrome c oxidase subunit 6B1 (COX6B1) from Bos taurus (Bovine).